The primary structure comprises 202 residues: CASP-like protein 2B1 (202 aa).

Topologically, residues 1–29 are cytoplasmic; sequence MSYLGVGVSPGNVPVYHGTNLKVVDRRVR. The chain crosses the membrane as a helical span at residues 30 to 50; it reads LAELVLRCVICGLGILAAVLV. At 51–72 the chain is on the extracellular side; the sequence is GTDTQVKVIFTIQKKAKFTDMK. The helical transmembrane segment at 73–93 threads the bilayer; it reads ALVFLVIANGIAAAYSLIQGL. Over 94–109 the chain is Cytoplasmic; it reads RCVVSMVRGSVLFSKP. Residues 110-130 traverse the membrane as a helical segment; it reads LAWAIFSGDQVIAYLTLAAVA. The Extracellular portion of the chain corresponds to 131-164; it reads AAAQSSVFGEFGQPELQWMKICNMYGKFCNQVGE. A helical membrane pass occupies residues 165–185; sequence GIVSAVGVSLSMVILSGISAF. Residues 186 to 202 lie on the Cytoplasmic side of the membrane; it reads SLFRLYGGNKGTSGGRW.

Belongs to the Casparian strip membrane proteins (CASP) family. Homodimer and heterodimers.

The protein localises to the cell membrane. The sequence is that of CASP-like protein 2B1 from Vitis vinifera (Grape).